The primary structure comprises 232 residues: Movement and silencing protein TGBp1 (232 aa).

One can recognise a (+)RNA virus helicase ATP-binding domain in the interval 1–117 (MDVLINKLAS…GPGIVADFVC (117 aa)). One can recognise a (+)RNA virus helicase C-terminal domain in the interval 118 to 232 (NKTKRFGSST…ACPDATFAPS (115 aa)).

It belongs to the Tymovirales TGBp1 protein family. As to quaternary structure, homodimer and homooligomer. Interacts with capsid protein. Interacts with host AGO1; this interaction targets the host protein for degradation, thereby suppressing the antiviral RNA silencing.

The protein localises to the host cytoplasm. Functionally, transports viral genome to neighboring plant cells directly through plasmosdesmata, without any budding. The movement protein allows efficient cell to cell propagation, by bypassing the host cell wall barrier. Increases plasmodesma size exclusion limit. Acts as a suppressor of RNA-mediated gene silencing, also known as post-transcriptional gene silencing (PTGS), a mechanism of plant viral defense that limits the accumulation of viral RNAs. The polypeptide is Movement and silencing protein TGBp1 (Populus balsamifera (Balsam poplar)).